Consider the following 874-residue polypeptide: MKTSELRQKFLKFFETKGHTVVRSSSLVPHDDPTLLFTNAGMNQFKDVFLGFDKRPYSRATTAQKCVRAGGKHNDLENVGYTARHHTFFEMMGNFSFGDYFKRDAIHFAWEFLTSPEWLNIPKDKLLATVYAEDDEAYNIWLNEIGMPSERIVRIGDNKGAKYVSDNFWQMGDTGPCGPCSEIFYDHGEEIWGGIPGSPEEDGDRWIEIWNCVFMQFNRDEQGNMNPLPKPSVDTGMGLERMAAVMQHVHSNYEIDLFQDLLKAVARETGAAFSMDEPSLKVIADHIRSCSFLIADGVLPSNEGRGYVLRRIIRRAVRHGYKLGQSKPFFHKLVADLVKEMGGAYPELKEKQAQIEEALKNEESRFAQTLETGMALLENALAKGGKTLDGEIIFKLYDTYGFPYDLTADICRERNIELDEAGFEREMEAQRARARAAQSFKANAQLPYDGQDTEFKGYSERQTESKVLALYKDGEQVNELNEGDSGAVVIDFTPFYAESGGQVGDVGYIFSSENRFEVRDTQKIKAAVFGQFGVQTSGRLKVGDSVTAKVDDEIRNANMRNHSATHLMHKALRDVLGGHVEQKGSLVTAESTRFDISHPQAVTAEEIAEVERRVNEAVLANVAVNAAIMSMEDAQKTGAMMLFGEKYGEEVRVLQMGGFSTELCGGTHVSRTGDIGLFKIISEGGIAAGVRRIEAITGLNALKWAQEQERLVKDIIAETKAQTEKDVLAKIQAGAAHAKALEKELARAKAELAVHAGAKLLDDAKDLGAAKLVAAQIEADAAALREIVTDLTGKSDNAVILLAAVNDGKVSLCAGVSKPLTGKVKAGDLVKFAAEQVGGKGGGRPDLAQAGGTDAGKLPEMLVSVESWLCQKLS.

Zn(2+) is bound by residues His-562, His-566, Cys-664, and His-668.

It belongs to the class-II aminoacyl-tRNA synthetase family. Zn(2+) is required as a cofactor.

The protein resides in the cytoplasm. The enzyme catalyses tRNA(Ala) + L-alanine + ATP = L-alanyl-tRNA(Ala) + AMP + diphosphate. Catalyzes the attachment of alanine to tRNA(Ala) in a two-step reaction: alanine is first activated by ATP to form Ala-AMP and then transferred to the acceptor end of tRNA(Ala). Also edits incorrectly charged Ser-tRNA(Ala) and Gly-tRNA(Ala) via its editing domain. This is Alanine--tRNA ligase from Neisseria meningitidis serogroup A / serotype 4A (strain DSM 15465 / Z2491).